The chain runs to 150 residues: Leukotriene C4 synthase (150 aa).

Residues 1–6 (MKEETA) are Cytoplasmic-facing. The chain crosses the membrane as a helical span at residues 7–27 (LLATVTLLGVLLQAYFSLQVI). At 28-48 (SARRTFHVSPPLTSGPPEFER) the chain is on the lumenal side. R30 is a glutathione binding site. Catalysis depends on R31, which acts as the Proton donor. S36 carries the post-translational modification Phosphoserine. Residues 49-69 (VFRAQVNCSEYFPLFLATLWV) traverse the membrane as a helical segment. Residues 51–55 (RAQVN) and 58–59 (EY) each bind glutathione. Over 70–73 (AGIF) the chain is Cytoplasmic. A helical membrane pass occupies residues 74–94 (FHEGAAALCGLFYLFARLRYF). Residue 93–97 (YFQGY) participates in glutathione binding. At 95 to 104 (QGYARSAQHR) the chain is on the lumenal side. R104 (proton acceptor) is an active-site residue. The chain crosses the membrane as a helical span at residues 105–124 (LDPLYASARALWLLVAMAAL). Residues 125 to 150 (GLLVHFLPGTLRAALFRWLQVLLPMA) are Cytoplasmic-facing.

The protein belongs to the MAPEG family. As to quaternary structure, homotrimer. Interacts with ALOX5AP and ALOX5. Phosphorylation at Ser-36 by RPS6KB1 inhibits the leukotriene-C4 synthase activity.

It localises to the nucleus outer membrane. Its subcellular location is the endoplasmic reticulum membrane. The protein resides in the nucleus membrane. The catalysed reaction is leukotriene C4 = leukotriene A4 + glutathione. It carries out the reaction (13S,14S)-epoxy-(4Z,7Z,9E,11E,16Z,19Z)-docosahexaenoate + glutathione = (13R)-S-glutathionyl-(14S)-hydroxy-(4Z,7Z,9E,11E,16Z,19Z)-docosahexaenoate. It functions in the pathway lipid metabolism; leukotriene C4 biosynthesis. With respect to regulation, inhibited by MK886. Its function is as follows. Catalyzes the conjugation of leukotriene A4 with reduced glutathione (GSH) to form leukotriene C4 with high specificity. Can also catalyze the transfer of a glutathionyl group from glutathione (GSH) to 13(S),14(S)-epoxy-docosahexaenoic acid to form maresin conjugate in tissue regeneration 1 (MCTR1), a bioactive lipid mediator that possess potent anti-inflammatory and proresolving actions. The chain is Leukotriene C4 synthase (Ltc4s) from Rattus norvegicus (Rat).